The chain runs to 509 residues: ATP synthase subunit alpha (509 aa).

169–176 is an ATP binding site; the sequence is GDRQTGKT.

The protein belongs to the ATPase alpha/beta chains family. As to quaternary structure, F-type ATPases have 2 components, CF(1) - the catalytic core - and CF(0) - the membrane proton channel. CF(1) has five subunits: alpha(3), beta(3), gamma(1), delta(1), epsilon(1). CF(0) has three main subunits: a(1), b(2) and c(9-12). The alpha and beta chains form an alternating ring which encloses part of the gamma chain. CF(1) is attached to CF(0) by a central stalk formed by the gamma and epsilon chains, while a peripheral stalk is formed by the delta and b chains.

Its subcellular location is the cell inner membrane. It catalyses the reaction ATP + H2O + 4 H(+)(in) = ADP + phosphate + 5 H(+)(out). In terms of biological role, produces ATP from ADP in the presence of a proton gradient across the membrane. The alpha chain is a regulatory subunit. The sequence is that of ATP synthase subunit alpha from Methylorubrum extorquens (strain CM4 / NCIMB 13688) (Methylobacterium extorquens).